The sequence spans 566 residues: Membrane protein insertase YidC (566 aa).

A run of 5 helical transmembrane segments spans residues 3–23 (IKRIILYVIVALLAIALFNAW), 346–366 (GWLWPISMLLFWILSSVHAVV), 369–389 (WGWSIIITTILIKIVFYWFSA), 436–456 (GGCLPMLIQVPVFIAFYYVII), and 509–529 (MWILPVIFTVFFINFPAGLVL).

The protein belongs to the OXA1/ALB3/YidC family. Type 1 subfamily. As to quaternary structure, interacts with the Sec translocase complex via SecD. Specifically interacts with transmembrane segments of nascent integral membrane proteins during membrane integration.

The protein localises to the cell inner membrane. Its function is as follows. Required for the insertion and/or proper folding and/or complex formation of integral membrane proteins into the membrane. Involved in integration of membrane proteins that insert both dependently and independently of the Sec translocase complex, as well as at least some lipoproteins. Aids folding of multispanning membrane proteins. The polypeptide is Membrane protein insertase YidC (Coxiella burnetii (strain Dugway 5J108-111)).